We begin with the raw amino-acid sequence, 229 residues long: Complex I assembly factor TMEM126B, mitochondrial (229 aa).

4 helical membrane-spanning segments follow: residues 71–91 (IRGT…ANLV), 109–129 (LTTL…TDAL), 140–160 (VLRS…ALAF), and 198–218 (VPLL…YAVC).

As to quaternary structure, part of the mitochondrial complex I assembly/MCIA complex that comprises at least the core subunits TMEM126B, NDUFAF1, ECSIT and ACAD9 and complement subunits such as COA1 and TMEM186. Associates with the intermediate 370 kDa subcomplex of incompletely assembled complex I. Interacts with TMEM70.

The protein resides in the mitochondrion membrane. As part of the MCIA complex, involved in the assembly of the mitochondrial complex I. Participates in constructing the membrane arm of complex I. This Rattus norvegicus (Rat) protein is Complex I assembly factor TMEM126B, mitochondrial.